The following is a 619-amino-acid chain: Dihydroxy-acid dehydratase (619 aa).

A Mg(2+)-binding site is contributed by aspartate 81. Cysteine 122 serves as a coordination point for [2Fe-2S] cluster. Residues aspartate 123 and lysine 124 each coordinate Mg(2+). At lysine 124 the chain carries N6-carboxylysine. Cysteine 195 serves as a coordination point for [2Fe-2S] cluster. Glutamate 494 is a Mg(2+) binding site. The active-site Proton acceptor is serine 520.

Belongs to the IlvD/Edd family. Homodimer. The cofactor is [2Fe-2S] cluster. Mg(2+) serves as cofactor.

It catalyses the reaction (2R)-2,3-dihydroxy-3-methylbutanoate = 3-methyl-2-oxobutanoate + H2O. The catalysed reaction is (2R,3R)-2,3-dihydroxy-3-methylpentanoate = (S)-3-methyl-2-oxopentanoate + H2O. It functions in the pathway amino-acid biosynthesis; L-isoleucine biosynthesis; L-isoleucine from 2-oxobutanoate: step 3/4. The protein operates within amino-acid biosynthesis; L-valine biosynthesis; L-valine from pyruvate: step 3/4. Functionally, functions in the biosynthesis of branched-chain amino acids. Catalyzes the dehydration of (2R,3R)-2,3-dihydroxy-3-methylpentanoate (2,3-dihydroxy-3-methylvalerate) into 2-oxo-3-methylpentanoate (2-oxo-3-methylvalerate) and of (2R)-2,3-dihydroxy-3-methylbutanoate (2,3-dihydroxyisovalerate) into 2-oxo-3-methylbutanoate (2-oxoisovalerate), the penultimate precursor to L-isoleucine and L-valine, respectively. The protein is Dihydroxy-acid dehydratase of Shewanella sp. (strain MR-7).